Reading from the N-terminus, the 142-residue chain is MTTFTAKNETVQRDWYLVDAEGKTLGRLATELARRLLGKTKPVYTPHVDTGDYLVVINAEKVVVTGKKLTDKYYHRFTGYVGNLKSESLGQALQRHPERVLEIAVKGMLPKGPLGRAMYRKLKVYTGSKHPHTAQQPQVLDI.

Belongs to the universal ribosomal protein uL13 family. Part of the 50S ribosomal subunit.

This protein is one of the early assembly proteins of the 50S ribosomal subunit, although it is not seen to bind rRNA by itself. It is important during the early stages of 50S assembly. The chain is Large ribosomal subunit protein uL13 from Xylella fastidiosa (strain M23).